Here is a 673-residue protein sequence, read N- to C-terminus: Mechanosensitive ion channel protein 2, chloroplastic (673 aa).

The N-terminal 75 residues, 1–75, are a transit peptide targeting the chloroplast; it reads MALYGTLQLS…SVPCRTTAFR (75 aa). 5 consecutive transmembrane segments (helical) span residues 107–127, 152–172, 193–213, 240–260, and 264–284; these read FPFVYKLVPAVALLVFSLWGL, YHVMTSYVQPLLLWLGALFIC, LNFVRSLSTVLAFAYCLSSLI, ALYSAVWVAAVSLFMELLGFS, and WLTAGGLGTVLITLAGREILT. Residues 492 to 673 form a disordered region; sequence KINGEDKSKS…QPNSGASTEP (182 aa). 3 stretches are compositionally biased toward basic and acidic residues: residues 510–525, 564–576, and 617–642; these read AEQENKGSNPKSKETS, TPKDTETSGTEKP, and GSKRTLPIEEEIHSPPMETDAKELTG. Ser571 bears the Phosphoserine mark. Polar residues predominate over residues 661-673; it reads SQSQPNSGASTEP.

Belongs to the MscS (TC 1.A.23) family. As to expression, widely expressed.

It localises to the plastid. Its subcellular location is the chloroplast membrane. Its function is as follows. Mechanosensitive channel that opens in response to stretch forces in the membrane lipid bilayer. Controls plastid size, shape, and perhaps division during normal plant development by altering ion flux in response to changes in membrane tension. Acts as a component of the chloroplast division machinery. This chain is Mechanosensitive ion channel protein 2, chloroplastic (MSL2), found in Arabidopsis thaliana (Mouse-ear cress).